A 525-amino-acid chain; its full sequence is GMP synthase [glutamine-hydrolyzing] (525 aa).

A Glutamine amidotransferase type-1 domain is found at 9–207 (RILILDFGSQ…VRDICQCEAL (199 aa)). Catalysis depends on cysteine 86, which acts as the Nucleophile. Residues histidine 181 and glutamate 183 contribute to the active site. A GMPS ATP-PPase domain is found at 208-400 (WTPAKIIDDA…LGLPYDMLYR (193 aa)). Position 235 to 241 (235 to 241 (SGGVDSS)) interacts with ATP.

Homodimer.

It carries out the reaction XMP + L-glutamine + ATP + H2O = GMP + L-glutamate + AMP + diphosphate + 2 H(+). It participates in purine metabolism; GMP biosynthesis; GMP from XMP (L-Gln route): step 1/1. Functionally, catalyzes the synthesis of GMP from XMP. The protein is GMP synthase [glutamine-hydrolyzing] of Escherichia fergusonii (strain ATCC 35469 / DSM 13698 / CCUG 18766 / IAM 14443 / JCM 21226 / LMG 7866 / NBRC 102419 / NCTC 12128 / CDC 0568-73).